Consider the following 395-residue polypeptide: Pyridinium-3,5-bisthiocarboxylic acid mononucleotide nickel insertion protein (395 aa).

The protein belongs to the LarC family.

It catalyses the reaction Ni(II)-pyridinium-3,5-bisthiocarboxylate mononucleotide = pyridinium-3,5-bisthiocarboxylate mononucleotide + Ni(2+). Involved in the biosynthesis of a nickel-pincer cofactor ((SCS)Ni(II) pincer complex). Binds Ni(2+), and functions in nickel delivery to pyridinium-3,5-bisthiocarboxylic acid mononucleotide (P2TMN), to form the mature cofactor. Is thus probably required for the activation of nickel-pincer cofactor-dependent enzymes. The polypeptide is Pyridinium-3,5-bisthiocarboxylic acid mononucleotide nickel insertion protein (Staphylococcus epidermidis (strain ATCC 12228 / FDA PCI 1200)).